Consider the following 386-residue polypeptide: PqqA peptide cyclase (386 aa).

Residues 9 to 228 (SKPPLWLLAE…RQYIDQHHLK (220 aa)) form the Radical SAM core domain. Residues C23, C27, and C30 each coordinate [4Fe-4S] cluster.

It belongs to the radical SAM superfamily. PqqE family. In terms of assembly, interacts with PqqD. The interaction is necessary for activity of PqqE. It depends on [4Fe-4S] cluster as a cofactor.

The catalysed reaction is [PQQ precursor protein] + S-adenosyl-L-methionine = E-Y cross-linked-[PQQ precursor protein] + 5'-deoxyadenosine + L-methionine + H(+). The protein operates within cofactor biosynthesis; pyrroloquinoline quinone biosynthesis. Its function is as follows. Catalyzes the cross-linking of a glutamate residue and a tyrosine residue in the PqqA protein as part of the biosynthesis of pyrroloquinoline quinone (PQQ). This is PqqA peptide cyclase from Acinetobacter baylyi (strain ATCC 33305 / BD413 / ADP1).